We begin with the raw amino-acid sequence, 331 residues long: Ferredoxin--NADP reductase 2 (331 aa).

FAD-binding residues include Glu-37, Gln-45, Tyr-50, Val-90, Phe-124, Asp-286, and Thr-327.

Belongs to the ferredoxin--NADP reductase type 2 family. In terms of assembly, homodimer. Requires FAD as cofactor.

The enzyme catalyses 2 reduced [2Fe-2S]-[ferredoxin] + NADP(+) + H(+) = 2 oxidized [2Fe-2S]-[ferredoxin] + NADPH. This Listeria monocytogenes serotype 4b (strain F2365) protein is Ferredoxin--NADP reductase 2.